A 502-amino-acid polypeptide reads, in one-letter code: Putative diacyglycerol O-acyltransferase Rv1760 (502 aa).

Histidine 174 acts as the Proton acceptor in catalysis.

Belongs to the long-chain O-acyltransferase family.

It carries out the reaction an acyl-CoA + a 1,2-diacyl-sn-glycerol = a triacyl-sn-glycerol + CoA. It catalyses the reaction di-(9Z)-octadecenoylglycerol + (9Z)-octadecenoyl-CoA = 1,2,3-tri-(9Z-octadecenoyl)-glycerol + CoA. Its pathway is glycerolipid metabolism; triacylglycerol biosynthesis. Catalyzes the terminal and only committed step in triacylglycerol synthesis by using diacylglycerol and fatty acyl CoA as substrates. Required for storage lipid synthesis. In terms of biological role, upon expression in E.coli functions weakly as a triacylglycerol synthase, making triacylglycerol (TG) from diolein and long-chain fatty acyl-CoA. Has very weak wax synthase activity, incorporating palmityl alcohol into wax esters in the presence of palmitoyl-CoA. The chain is Putative diacyglycerol O-acyltransferase Rv1760 from Mycobacterium tuberculosis (strain ATCC 25618 / H37Rv).